A 697-amino-acid polypeptide reads, in one-letter code: Elongation factor G (697 aa).

The tr-type G domain occupies 8–283; sequence EHIRNIGICA…AVVDFLPSPT (276 aa). GTP contacts are provided by residues 17–24, 81–85, and 135–138; these read AHIDAGKT, DTPGH, and NKMD.

It belongs to the TRAFAC class translation factor GTPase superfamily. Classic translation factor GTPase family. EF-G/EF-2 subfamily.

The protein resides in the cytoplasm. Functionally, catalyzes the GTP-dependent ribosomal translocation step during translation elongation. During this step, the ribosome changes from the pre-translocational (PRE) to the post-translocational (POST) state as the newly formed A-site-bound peptidyl-tRNA and P-site-bound deacylated tRNA move to the P and E sites, respectively. Catalyzes the coordinated movement of the two tRNA molecules, the mRNA and conformational changes in the ribosome. The sequence is that of Elongation factor G from Rickettsia rhipicephali.